A 279-amino-acid polypeptide reads, in one-letter code: tRNA dimethylallyltransferase (279 aa).

10 to 17 (GPTASGKS) contacts ATP. 12 to 17 (TASGKS) serves as a coordination point for substrate.

The protein belongs to the IPP transferase family. As to quaternary structure, monomer. The cofactor is Mg(2+).

The enzyme catalyses adenosine(37) in tRNA + dimethylallyl diphosphate = N(6)-dimethylallyladenosine(37) in tRNA + diphosphate. Functionally, catalyzes the transfer of a dimethylallyl group onto the adenine at position 37 in tRNAs that read codons beginning with uridine, leading to the formation of N6-(dimethylallyl)adenosine (i(6)A). The polypeptide is tRNA dimethylallyltransferase (Roseobacter denitrificans (strain ATCC 33942 / OCh 114) (Erythrobacter sp. (strain OCh 114))).